The sequence spans 251 residues: Methionine aminopeptidase (251 aa).

H77 contacts substrate. A divalent metal cation-binding residues include D94, D105, and H169. Residue H176 participates in substrate binding. 2 residues coordinate a divalent metal cation: E202 and E233.

Belongs to the peptidase M24A family. Methionine aminopeptidase type 1 subfamily. As to quaternary structure, monomer. Co(2+) is required as a cofactor. The cofactor is Zn(2+). Requires Mn(2+) as cofactor. Fe(2+) serves as cofactor.

The catalysed reaction is Release of N-terminal amino acids, preferentially methionine, from peptides and arylamides.. Its function is as follows. Removes the N-terminal methionine from nascent proteins. The N-terminal methionine is often cleaved when the second residue in the primary sequence is small and uncharged (Met-Ala-, Cys, Gly, Pro, Ser, Thr, or Val). Requires deformylation of the N(alpha)-formylated initiator methionine before it can be hydrolyzed. The polypeptide is Methionine aminopeptidase (Mycoplasma capricolum subsp. capricolum (strain California kid / ATCC 27343 / NCTC 10154)).